Here is a 136-residue protein sequence, read N- to C-terminus: GFGIFVIFMFFSPSCILSQTLQESGPGTVKPSESLRLTCTVSGFELTSYYVYWIRQPPRKTLEWIGVVRTDGSTAIADSLKNRVTITKDNGKKQVYLQMNGMEVKDTAMYYCTSTLAGTAGYFEHWGQGTMVTVTS.

Positions 1–18 (GFGIFVIFMFFSPSCILS) are cleaved as a signal peptide. The region spanning 19 to 128 (QTLQESGPGT…TAGYFEHWGQ (110 aa)) is the Ig-like domain.

This Xenopus laevis (African clawed frog) protein is Ig heavy chain V region XIG8.